The sequence spans 183 residues: Crossover junction endodeoxyribonuclease RuvC (183 aa).

Residues aspartate 7, glutamate 66, and aspartate 138 contribute to the active site. Residues aspartate 7, glutamate 66, and aspartate 138 each coordinate Mg(2+).

This sequence belongs to the RuvC family. As to quaternary structure, homodimer which binds Holliday junction (HJ) DNA. The HJ becomes 2-fold symmetrical on binding to RuvC with unstacked arms; it has a different conformation from HJ DNA in complex with RuvA. In the full resolvosome a probable DNA-RuvA(4)-RuvB(12)-RuvC(2) complex forms which resolves the HJ. It depends on Mg(2+) as a cofactor.

The protein resides in the cytoplasm. It catalyses the reaction Endonucleolytic cleavage at a junction such as a reciprocal single-stranded crossover between two homologous DNA duplexes (Holliday junction).. Functionally, the RuvA-RuvB-RuvC complex processes Holliday junction (HJ) DNA during genetic recombination and DNA repair. Endonuclease that resolves HJ intermediates. Cleaves cruciform DNA by making single-stranded nicks across the HJ at symmetrical positions within the homologous arms, yielding a 5'-phosphate and a 3'-hydroxyl group; requires a central core of homology in the junction. The consensus cleavage sequence is 5'-(A/T)TT(C/G)-3'. Cleavage occurs on the 3'-side of the TT dinucleotide at the point of strand exchange. HJ branch migration catalyzed by RuvA-RuvB allows RuvC to scan DNA until it finds its consensus sequence, where it cleaves and resolves the cruciform DNA. The protein is Crossover junction endodeoxyribonuclease RuvC of Burkholderia ambifaria (strain MC40-6).